The sequence spans 119 residues: Ribonuclease P protein component (119 aa).

The disordered stretch occupies residues 1-24 (MRGSSRFRPHEKLRASDDYQRVKR). Residues 8 to 21 (RPHEKLRASDDYQR) are compositionally biased toward basic and acidic residues.

It belongs to the RnpA family. Consists of a catalytic RNA component (M1 or rnpB) and a protein subunit.

The enzyme catalyses Endonucleolytic cleavage of RNA, removing 5'-extranucleotides from tRNA precursor.. RNaseP catalyzes the removal of the 5'-leader sequence from pre-tRNA to produce the mature 5'-terminus. It can also cleave other RNA substrates such as 4.5S RNA. The protein component plays an auxiliary but essential role in vivo by binding to the 5'-leader sequence and broadening the substrate specificity of the ribozyme. The chain is Ribonuclease P protein component from Syntrophobacter fumaroxidans (strain DSM 10017 / MPOB).